Here is a 134-residue protein sequence, read N- to C-terminus: 15.4 kDa class V heat shock protein (134 aa).

Residues 19 to 126 (SLNNYQENHV…LIDPSDVPES (108 aa)) enclose the sHSP domain.

The protein belongs to the small heat shock protein (HSP20) family. May form oligomeric structures.

Its subcellular location is the cytoplasm. The chain is 15.4 kDa class V heat shock protein (HSP15.4) from Arabidopsis thaliana (Mouse-ear cress).